Consider the following 131-residue polypeptide: Small ribosomal subunit protein uS8 (131 aa).

The protein belongs to the universal ribosomal protein uS8 family. In terms of assembly, part of the 30S ribosomal subunit. Contacts proteins S5 and S12.

In terms of biological role, one of the primary rRNA binding proteins, it binds directly to 16S rRNA central domain where it helps coordinate assembly of the platform of the 30S subunit. This Acholeplasma laidlawii (strain PG-8A) protein is Small ribosomal subunit protein uS8.